Reading from the N-terminus, the 117-residue chain is Large ribosomal subunit protein bL19 (117 aa).

This sequence belongs to the bacterial ribosomal protein bL19 family.

In terms of biological role, this protein is located at the 30S-50S ribosomal subunit interface and may play a role in the structure and function of the aminoacyl-tRNA binding site. The chain is Large ribosomal subunit protein bL19 from Bacteroides thetaiotaomicron (strain ATCC 29148 / DSM 2079 / JCM 5827 / CCUG 10774 / NCTC 10582 / VPI-5482 / E50).